The sequence spans 503 residues: Probable folate-biopterin transporter 6 (503 aa).

The next 12 helical transmembrane spans lie at 56–76 (SFVL…GSIF), 101–121 (LYYI…VFPI), 128–148 (PYFV…VVLG), 153–173 (ALAL…DVVI), 194–214 (LCMV…GVFV), 221–241 (GALG…FFIY), 281–301 (LYMF…FYWY), 314–334 (FVGI…LIYH), 344–364 (NILF…LVFI), 369–389 (LTLG…TKMI), 404–424 (LCPL…DSFG), and 450–470 (WLVI…VFLV).

It belongs to the major facilitator superfamily. Folate-biopterin transporter (TC 2.A.71) family.

Its subcellular location is the membrane. Could mediate folate transport. The polypeptide is Probable folate-biopterin transporter 6 (Arabidopsis thaliana (Mouse-ear cress)).